A 391-amino-acid chain; its full sequence is Succinate--CoA ligase [GDP-forming] subunit beta, mitochondrial (391 aa).

Residues 5–233 (KKIMADHGVT…NAEFRQKEIF (229 aa)) enclose the ATP-grasp domain. Residues Gln-16, 49–51 (GRG), and Leu-105 each bind GTP. Positions 202 and 216 each coordinate Mg(2+). Substrate-binding positions include Asn-267 and 324–326 (GIV).

Belongs to the succinate/malate CoA ligase beta subunit family. GTP-specific subunit beta subfamily. Heterodimer of an alpha and a beta subunit. The beta subunit determines specificity for GTP. Mg(2+) serves as cofactor. Widely expressed. Not present in breast muscle.

The protein localises to the mitochondrion. The enzyme catalyses GTP + succinate + CoA = succinyl-CoA + GDP + phosphate. The protein operates within carbohydrate metabolism; tricarboxylic acid cycle; succinate from succinyl-CoA (ligase route): step 1/1. Its function is as follows. GTP-specific succinyl-CoA synthetase functions in the citric acid cycle (TCA), coupling the hydrolysis of succinyl-CoA to the synthesis of GTP and thus represents the only step of substrate-level phosphorylation in the TCA. The beta subunit provides nucleotide specificity of the enzyme and binds the substrate succinate, while the binding sites for coenzyme A and phosphate are found in the alpha subunit. The polypeptide is Succinate--CoA ligase [GDP-forming] subunit beta, mitochondrial (Columba livia (Rock dove)).